The sequence spans 97 residues: MAPAASGAKKQKKKWSKGKVKDKAQHAVILDKSTSDKLYKDVQSYRLVTVATLVDRLKINGSLARRCLKDLEEKGQIKQVVGHSKMKIYTRAIGADE.

The interval 1–24 (MAPAASGAKKQKKKWSKGKVKDKA) is disordered. Positions 9 to 18 (KKQKKKWSKG) are enriched in basic residues.

It belongs to the eukaryotic ribosomal protein eS25 family. Component of the small ribosomal subunit (SSU). Mature N.crassa ribosomes consist of a small (40S) and a large (60S) subunit. The 40S small subunit contains 1 molecule of ribosomal RNA (18S rRNA) and at least 32 different proteins. The large 60S subunit contains 3 rRNA molecules (26S, 5.8S and 5S rRNA) and at least 42 different proteins.

It localises to the cytoplasm. Functionally, component of the ribosome, a large ribonucleoprotein complex responsible for the synthesis of proteins in the cell. The small ribosomal subunit (SSU) binds messenger RNAs (mRNAs) and translates the encoded message by selecting cognate aminoacyl-transfer RNA (tRNA) molecules. The large subunit (LSU) contains the ribosomal catalytic site termed the peptidyl transferase center (PTC), which catalyzes the formation of peptide bonds, thereby polymerizing the amino acids delivered by tRNAs into a polypeptide chain. The nascent polypeptides leave the ribosome through a tunnel in the LSU and interact with protein factors that function in enzymatic processing, targeting, and the membrane insertion of nascent chains at the exit of the ribosomal tunnel. The protein is Small ribosomal subunit protein eS25 (rps-25) of Neurospora crassa (strain ATCC 24698 / 74-OR23-1A / CBS 708.71 / DSM 1257 / FGSC 987).